An 858-amino-acid polypeptide reads, in one-letter code: Elongation factor 2 (858 aa).

A tr-type G domain is found at 17–362 (ANIRNMSVIA…MITIHLPSPV (346 aa)). 26-33 (AHVDHGKS) lines the GTP pocket. Position 54 is a phosphothreonine (threonine 54). The residue at position 57 (threonine 57) is a Phosphothreonine; by EEF2K. Threonine 59 is subject to Phosphothreonine. Position 152 is an N6-succinyllysine (lysine 152). GTP-binding positions include 158 to 161 (NKMD) and 216 to 218 (SGL). Lysine 235 bears the N6-acetyllysine mark. Lysine 239 is modified (N6-acetyllysine; alternate). Residue lysine 239 forms a Glycyl lysine isopeptide (Lys-Gly) (interchain with G-Cter in SUMO1); alternate linkage. Tyrosine 265 carries the post-translational modification Phosphotyrosine; by CSK. The residue at position 272 (lysine 272) is an N6-acetyllysine; alternate. Lysine 272 carries the N6-succinyllysine; alternate modification. An N6-acetyllysine modification is found at lysine 275. A Glycyl lysine isopeptide (Lys-Gly) (interchain with G-Cter in SUMO) cross-link involves residue lysine 322. Phosphoserine is present on serine 325. Tyrosine 373 carries the phosphotyrosine; by CSK modification. At threonine 435 the chain carries Phosphothreonine. Lysine 439 and lysine 445 each carry N6-acetyllysine. Serine 502 is subject to Phosphoserine. Lysine 525 carries the post-translational modification N6,N6,N6-trimethyllysine; by EEF2KMT. A Glycyl lysine isopeptide (Lys-Gly) (interchain with G-Cter in SUMO) cross-link involves residue lysine 529. Position 572 is an N6-succinyllysine (lysine 572). Phosphoserine; by CDK2 is present on serine 595. Lysine 619 is modified (N6-acetyllysine). A (Microbial infection) ADP-ribosyldiphthamide modification is found at histidine 715. Diphthamide is present on histidine 715.

It belongs to the TRAFAC class translation factor GTPase superfamily. Classic translation factor GTPase family. EF-G/EF-2 subfamily. As to quaternary structure, binds to 80S ribosomes. Actively translating ribosomes show mutually exclusive binding of eIF5a (EIF5A or EIF5A2) and EEF2/eEF2. Interacts with SERBP1; interaction sequesters EEF2/eEF2 at the A-site of the ribosome, thereby blocking the interaction sites of the mRNA-tRNA complex, promoting ribosome stabilization and hibernation. Interacts with HABP4; interaction takes place at the A-site of hibernating ribosomes and promotes ribosome stabilization. Component of the mRNA surveillance SURF complex, at least composed of ERF1, ERF3 (ERF3A or ERF3B), EEF2, UPF1/RENT1, SMG1, SMG8 and SMG9. Interacts with RBPMS2. Post-translationally, phosphorylation by EF-2 kinase completely inactivates EF-2; it requires prior phosphorylation by CDK2 at Ser-595 during mitotic prometaphase. Phosphorylation by CSK promotes SUMOylation, proteolytic cleavage, and nuclear translocation if the C-terminal fragment. Diphthamide is 2-[3-carboxyamido-3-(trimethyl-ammonio)propyl]histidine. In terms of processing, (Microbial infection) Diphthamide can be ADP-ribosylated by diphtheria toxin and by Pseudomonas exotoxin A, thus arresting protein synthesis. Post-translationally, ISGylated. Proteolytically processed at two sites following phosphorylation by CSK. In terms of processing, SUMOylated following phosphorylation by CSK, promotes proteolytic cleavage.

It localises to the cytoplasm. It is found in the nucleus. The catalysed reaction is GTP + H2O = GDP + phosphate + H(+). Catalyzes the GTP-dependent ribosomal translocation step during translation elongation. During this step, the ribosome changes from the pre-translocational (PRE) to the post-translocational (POST) state as the newly formed A-site-bound peptidyl-tRNA and P-site-bound deacylated tRNA move to the P and E sites, respectively. Catalyzes the coordinated movement of the two tRNA molecules, the mRNA and conformational changes in the ribosome. The sequence is that of Elongation factor 2 (EEF2) from Cricetulus griseus (Chinese hamster).